Reading from the N-terminus, the 424-residue chain is Histidine--tRNA ligase (424 aa).

This sequence belongs to the class-II aminoacyl-tRNA synthetase family. In terms of assembly, homodimer.

The protein localises to the cytoplasm. It catalyses the reaction tRNA(His) + L-histidine + ATP = L-histidyl-tRNA(His) + AMP + diphosphate + H(+). The protein is Histidine--tRNA ligase of Escherichia coli O17:K52:H18 (strain UMN026 / ExPEC).